A 538-amino-acid polypeptide reads, in one-letter code: Bifunctional purine biosynthesis protein PurH (538 aa).

An MGS-like domain is found at 8 to 158; that stretch reads IPAPDLVPVR…KNHAYVAIVT (151 aa).

It belongs to the PurH family.

The catalysed reaction is (6R)-10-formyltetrahydrofolate + 5-amino-1-(5-phospho-beta-D-ribosyl)imidazole-4-carboxamide = 5-formamido-1-(5-phospho-D-ribosyl)imidazole-4-carboxamide + (6S)-5,6,7,8-tetrahydrofolate. It catalyses the reaction IMP + H2O = 5-formamido-1-(5-phospho-D-ribosyl)imidazole-4-carboxamide. It functions in the pathway purine metabolism; IMP biosynthesis via de novo pathway; 5-formamido-1-(5-phospho-D-ribosyl)imidazole-4-carboxamide from 5-amino-1-(5-phospho-D-ribosyl)imidazole-4-carboxamide (10-formyl THF route): step 1/1. Its pathway is purine metabolism; IMP biosynthesis via de novo pathway; IMP from 5-formamido-1-(5-phospho-D-ribosyl)imidazole-4-carboxamide: step 1/1. In Mesorhizobium japonicum (strain LMG 29417 / CECT 9101 / MAFF 303099) (Mesorhizobium loti (strain MAFF 303099)), this protein is Bifunctional purine biosynthesis protein PurH.